The following is a 499-amino-acid chain: Alpha-amylase B (499 aa).

Residues 1–21 form the signal peptide; that stretch reads MMVAWWSLFLYGLQVAAPALA. Cys51 and Cys59 are oxidised to a cystine. Gln56 and Trp104 together coordinate substrate. Residue Asn142 coordinates Ca(2+). A substrate-binding site is contributed by His143. An intrachain disulfide couples Cys171 to Cys185. Positions 183 and 196 each coordinate Ca(2+). N-linked (GlcNAc...) asparagine glycosylation is present at Asn218. Arg225 contributes to the substrate binding site. Residues Asp227, His231, and Glu251 each coordinate Ca(2+). Asp227 acts as the Nucleophile in catalysis. 230 to 231 is a substrate binding site; that stretch reads KH. The Proton donor role is filled by Glu251. Residue Gly255 coordinates substrate. The cysteines at positions 261 and 304 are disulfide-linked. Substrate contacts are provided by Asp318 and Arg365. Residues Cys461 and Cys496 are joined by a disulfide bond.

It belongs to the glycosyl hydrolase 13 family. Ca(2+) is required as a cofactor.

It carries out the reaction Endohydrolysis of (1-&gt;4)-alpha-D-glucosidic linkages in polysaccharides containing three or more (1-&gt;4)-alpha-linked D-glucose units.. The protein is Alpha-amylase B (amyB) of Aspergillus awamori (Black koji mold).